Here is a 499-residue protein sequence, read N- to C-terminus: Lysine--tRNA ligase (499 aa).

Mg(2+)-binding residues include Glu-408 and Glu-415.

The protein belongs to the class-II aminoacyl-tRNA synthetase family. As to quaternary structure, homodimer. Requires Mg(2+) as cofactor.

The protein localises to the cytoplasm. It catalyses the reaction tRNA(Lys) + L-lysine + ATP = L-lysyl-tRNA(Lys) + AMP + diphosphate. The sequence is that of Lysine--tRNA ligase from Agrobacterium fabrum (strain C58 / ATCC 33970) (Agrobacterium tumefaciens (strain C58)).